A 608-amino-acid chain; its full sequence is Afamin (608 aa).

The signal sequence occupies residues 1–21 (MRHLKLTGFIFFLLSLTESLA). Albumin domains are found at residues 22–210 (LPTK…APIT), 211–403 (QYLK…KFNE), and 404–599 (TTER…KTGD). N-linked (GlcNAc...) asparagine glycosylation occurs at asparagine 33. 10 disulfide bridges follow: cysteine 77/cysteine 86, cysteine 99/cysteine 114, cysteine 113/cysteine 124, cysteine 148/cysteine 193, cysteine 224/cysteine 270, cysteine 269/cysteine 277, cysteine 289/cysteine 303, cysteine 302/cysteine 313, cysteine 340/cysteine 385, and cysteine 384/cysteine 393. Asparagine 109 is a glycosylation site (N-linked (GlcNAc...) asparagine). Residue asparagine 153 is glycosylated (N-linked (GlcNAc...) asparagine). Residues 215–319 (ALSSYQRNVC…RADCIINANK (105 aa)) are binding pocket for hydrophobic ligands. The N-linked (GlcNAc...) asparagine glycan is linked to asparagine 402. 5 disulfides stabilise this stretch: cysteine 416–cysteine 462, cysteine 461–cysteine 470, cysteine 483–cysteine 499, cysteine 498–cysteine 509, and cysteine 580–cysteine 589. Residue asparagine 488 is glycosylated (N-linked (GlcNAc...) asparagine). Positions 585-608 (KPEACFSPESSKTGDVSQDAEKQR) are disordered.

Belongs to the ALB/AFP/VDB family. In terms of assembly, forms a 1:1 complex with Wnt family members; interacts with WNT1, WNT2B, WNT3, WNT3A, WNT5A, WNT7A, WNT7B, WNT8, WNT9A, WNT9B, WNT10A and WNT10B. N-glycosylated; more than 90% of the glycans are sialylated.

The protein localises to the secreted. Functions as a carrier for hydrophobic molecules in body fluids. Essential for the solubility and activity of lipidated Wnt family members, including WNT1, WNT2B, WNT3, WNT3A, WNT5A, WNT7A, WNT7B, WNT8, WNT9A, WNT9B, WNT10A and WNT10B. Binds vitamin E. May transport vitamin E in body fluids under conditions where the lipoprotein system is not sufficient. May be involved in the transport of vitamin E across the blood-brain barrier. The sequence is that of Afamin (Afm) from Rattus norvegicus (Rat).